Reading from the N-terminus, the 67-residue chain is Small ribosomal subunit protein eS17 (67 aa).

The protein belongs to the eukaryotic ribosomal protein eS17 family. Part of the 30S ribosomal subunit.

This Pyrococcus furiosus (strain ATCC 43587 / DSM 3638 / JCM 8422 / Vc1) protein is Small ribosomal subunit protein eS17.